We begin with the raw amino-acid sequence, 245 residues long: tRNA pseudouridine synthase A (245 aa).

Asp52 serves as the catalytic Nucleophile. Tyr112 contributes to the substrate binding site.

Belongs to the tRNA pseudouridine synthase TruA family. In terms of assembly, homodimer.

The enzyme catalyses uridine(38/39/40) in tRNA = pseudouridine(38/39/40) in tRNA. In terms of biological role, formation of pseudouridine at positions 38, 39 and 40 in the anticodon stem and loop of transfer RNAs. This chain is tRNA pseudouridine synthase A, found in Dictyoglomus turgidum (strain DSM 6724 / Z-1310).